The following is an 887-amino-acid chain: Alanine--tRNA ligase (887 aa).

Zn(2+) contacts are provided by H564, H568, C676, and H680.

It belongs to the class-II aminoacyl-tRNA synthetase family. Zn(2+) is required as a cofactor.

It is found in the cytoplasm. It carries out the reaction tRNA(Ala) + L-alanine + ATP = L-alanyl-tRNA(Ala) + AMP + diphosphate. Catalyzes the attachment of alanine to tRNA(Ala) in a two-step reaction: alanine is first activated by ATP to form Ala-AMP and then transferred to the acceptor end of tRNA(Ala). Also edits incorrectly charged Ser-tRNA(Ala) and Gly-tRNA(Ala) via its editing domain. In Chelativorans sp. (strain BNC1), this protein is Alanine--tRNA ligase.